A 284-amino-acid chain; its full sequence is L-ribulose-5-phosphate 3-epimerase UlaE (284 aa).

Belongs to the L-ribulose-5-phosphate 3-epimerase family.

The catalysed reaction is L-ribulose 5-phosphate = L-xylulose 5-phosphate. Its pathway is cofactor degradation; L-ascorbate degradation; D-xylulose 5-phosphate from L-ascorbate: step 3/4. Catalyzes the isomerization of L-xylulose-5-phosphate to L-ribulose-5-phosphate. Is involved in the anaerobic L-ascorbate utilization. The sequence is that of L-ribulose-5-phosphate 3-epimerase UlaE from Escherichia coli (strain K12 / MC4100 / BW2952).